We begin with the raw amino-acid sequence, 201 residues long: Holliday junction resolvase RecU (201 aa).

Residues threonine 87, aspartate 89, glutamate 102, and glutamine 121 each coordinate Mg(2+).

It belongs to the RecU family. Requires Mg(2+) as cofactor.

It is found in the cytoplasm. It catalyses the reaction Endonucleolytic cleavage at a junction such as a reciprocal single-stranded crossover between two homologous DNA duplexes (Holliday junction).. Functionally, endonuclease that resolves Holliday junction intermediates in genetic recombination. Cleaves mobile four-strand junctions by introducing symmetrical nicks in paired strands. Promotes annealing of linear ssDNA with homologous dsDNA. Required for DNA repair, homologous recombination and chromosome segregation. This Listeria welshimeri serovar 6b (strain ATCC 35897 / DSM 20650 / CCUG 15529 / CIP 8149 / NCTC 11857 / SLCC 5334 / V8) protein is Holliday junction resolvase RecU.